We begin with the raw amino-acid sequence, 206 residues long: Large ribosomal subunit protein uL4 (206 aa).

Residues 63-97 (MYKQKGTGRARHHSARAPQFRGGGKAHGPVVRSHE) are disordered. Basic residues predominate over residues 64 to 77 (YKQKGTGRARHHSA).

This sequence belongs to the universal ribosomal protein uL4 family. As to quaternary structure, part of the 50S ribosomal subunit.

Functionally, one of the primary rRNA binding proteins, this protein initially binds near the 5'-end of the 23S rRNA. It is important during the early stages of 50S assembly. It makes multiple contacts with different domains of the 23S rRNA in the assembled 50S subunit and ribosome. Forms part of the polypeptide exit tunnel. This is Large ribosomal subunit protein uL4 from Rhizobium johnstonii (strain DSM 114642 / LMG 32736 / 3841) (Rhizobium leguminosarum bv. viciae).